The following is a 909-amino-acid chain: Short transient receptor potential channel 3 (909 aa).

Residues 1-92 (MSTKVKKCRE…VRGPAFMFGA (92 aa)) form a disordered region. Residues 1–447 (MSTKVKKCRE…KILRSPFMKF (447 aa)) are Cytoplasmic-facing. Residues 19–28 (PEEEDGEAEG) are compositionally biased toward acidic residues. Residues 47–57 (PPCPRAPPSPG) show a composition bias toward pro residues. A compositionally biased stretch (low complexity) spans 58 to 67 (PDASSEGSPS). 4 ANK repeats span residues 99 to 128 (AEEE…TLNV), 134 to 163 (MGQN…LARI), 165 to 191 (DALL…FAAS), and 220 to 249 (PDIT…RIER). Glutamate 146 lines the Ca(2+) pocket. A helical transmembrane segment spans residues 448–465 (VAHAASFIIFLGLLVFNA). Residues 466–496 (SDRFEGITTLPNITVIDYPKQIFRVKTTQFT) lie on the Extracellular side of the membrane. Asparagine 477 carries an N-linked (GlcNAc...) asparagine glycan. The helical transmembrane segment at 497–515 (WTEMLIMVWVLGMMWSECK) threads the bilayer. The Ca(2+) site is built by glutamate 513, glutamate 516, and asparagine 531. Residues 516-528 (ELWLEGPREYIVQ) are Cytoplasmic-facing. The chain crosses the membrane as a helical span at residues 529 to 550 (LWNVLDFGMLSIFIAAFTARFL). Topologically, residues 551–594 (AFLQATKAQQYVDSHVQESDLSEVTLPPEVQYFTYARDKWLPSD) are extracellular. The helical transmembrane segment at 595–618 (PQIISEGLYAIAVVLSFSRIAYIL) threads the bilayer. Topologically, residues 619-637 (PANESFGPLQISLGRTVKD) are cytoplasmic. One copy of the ANK 5 repeat lies at 622–651 (ESFGPLQISLGRTVKDIFKFMVLFIMVFLA). Residues 638-661 (IFKFMVLFIMVFLAFMIGMFILYS) form a helical membrane-spanning segment. The Extracellular segment spans residues 662-701 (YYLGAKVNPAFTTVEESFKTLFWSIFGLSEVTSVVLKYDH). A helical transmembrane segment spans residues 702 to 727 (KFIENIGYVLYGIYNVTMVVVLLNML). Residues 728-909 (IAMINSSYQE…KLNPSALRCE (182 aa)) lie on the Cytoplasmic side of the membrane. Positions 859, 862, 864, and 871 each coordinate Ca(2+).

It belongs to the transient receptor (TC 1.A.4) family. STrpC subfamily. TRPC3 sub-subfamily. As to quaternary structure, homotetramer. Interacts with ITPR1, ITPR3, MX1 and RNF24. Interacts with JPH2; the interaction is involved in maintaining Ca(2+) homeostasis in skeletal muscle and is mediated by JPH2 'Ser-165' phosphorylation.

It localises to the cell membrane. It carries out the reaction Ca(2+)(in) = Ca(2+)(out). Its activity is regulated as follows. Activated by diacylglycerol (DAG) in a membrane-delimited fashion, independently of protein kinase C. Activated by inositol 1,4,5-triphosphate receptors (ITPR) with bound IP3. May be activated by internal calcium store depletion. Inhibited by intracellular Ca(2+). Its function is as follows. Forms a receptor-activated non-selective calcium permeant cation channel. May be operated by a phosphatidylinositol second messenger system activated by receptor tyrosine kinases or G-protein coupled receptors. The protein is Short transient receptor potential channel 3 (Trpc3) of Rattus norvegicus (Rat).